The chain runs to 485 residues: Serine/threonine-protein kinase dst4 (485 aa).

The region spanning 21-278 (FRVLEVIGQG…AVDLLNHPFI (258 aa)) is the Protein kinase domain. Residues 27–35 (IGQGSFGVV) and Lys50 contribute to the ATP site. The Proton acceptor role is filled by Asp142. Disordered stretches follow at residues 304–343 (RRKK…SAGL), 360–424 (VMRE…GSVV), and 436–485 (SMKL…NQDD). The span at 310–324 (EEEAEEAEEGDDYDD) shows a compositional bias: acidic residues. The segment covering 370–393 (SNNGGTFIYNNNNNNSSKTSSSGT) has biased composition (low complexity). Composition is skewed to acidic residues over residues 406–417 (DDDDDDDIEEGG) and 450–468 (SSDE…EEGG). The span at 474–485 (VVYTKSPVNQDD) shows a compositional bias: polar residues.

Belongs to the protein kinase superfamily. STE Ser/Thr protein kinase family. STE20 subfamily. Mg(2+) is required as a cofactor.

The enzyme catalyses L-seryl-[protein] + ATP = O-phospho-L-seryl-[protein] + ADP + H(+). The catalysed reaction is L-threonyl-[protein] + ATP = O-phospho-L-threonyl-[protein] + ADP + H(+). The protein is Serine/threonine-protein kinase dst4 of Dictyostelium discoideum (Social amoeba).